Consider the following 151-residue polypeptide: Small ribosomal subunit protein uS15 (151 aa).

Belongs to the universal ribosomal protein uS15 family.

The polypeptide is Small ribosomal subunit protein uS15 (RpS13) (Anopheles gambiae (African malaria mosquito)).